The sequence spans 386 residues: S-adenosylmethionine synthase (386 aa).

Position 16 (histidine 16) interacts with ATP. Aspartate 18 provides a ligand contact to Mg(2+). Glutamate 44 is a K(+) binding site. Residues glutamate 57 and glutamine 100 each coordinate L-methionine. Residues 100–110 (QSPDINQGVDR) are flexible loop. ATP-binding positions include 164 to 166 (DGK), 230 to 231 (KF), aspartate 239, 245 to 246 (RK), alanine 262, and lysine 266. Residue aspartate 239 coordinates L-methionine. Lysine 270 provides a ligand contact to L-methionine.

This sequence belongs to the AdoMet synthase family. In terms of assembly, homotetramer; dimer of dimers. Mg(2+) serves as cofactor. The cofactor is K(+).

The protein localises to the cytoplasm. It carries out the reaction L-methionine + ATP + H2O = S-adenosyl-L-methionine + phosphate + diphosphate. The protein operates within amino-acid biosynthesis; S-adenosyl-L-methionine biosynthesis; S-adenosyl-L-methionine from L-methionine: step 1/1. Catalyzes the formation of S-adenosylmethionine (AdoMet) from methionine and ATP. The overall synthetic reaction is composed of two sequential steps, AdoMet formation and the subsequent tripolyphosphate hydrolysis which occurs prior to release of AdoMet from the enzyme. This chain is S-adenosylmethionine synthase, found in Helicobacter hepaticus (strain ATCC 51449 / 3B1).